Reading from the N-terminus, the 300-residue chain is Ribosomal RNA small subunit methyltransferase H (300 aa).

S-adenosyl-L-methionine contacts are provided by residues glycine 46–histidine 48, aspartate 65, phenylalanine 92, aspartate 107, and glutamine 114.

It belongs to the methyltransferase superfamily. RsmH family.

The protein localises to the cytoplasm. It carries out the reaction cytidine(1402) in 16S rRNA + S-adenosyl-L-methionine = N(4)-methylcytidine(1402) in 16S rRNA + S-adenosyl-L-homocysteine + H(+). Its function is as follows. Specifically methylates the N4 position of cytidine in position 1402 (C1402) of 16S rRNA. The polypeptide is Ribosomal RNA small subunit methyltransferase H (Prochlorococcus marinus (strain MIT 9312)).